A 574-amino-acid polypeptide reads, in one-letter code: Sorting nexin-33 (574 aa).

An SH3 domain is found at Met-1 to Ser-61. The disordered stretch occupies residues Ala-68–Asp-119. Phosphoserine is present on residues Ser-77 and Ser-92. A compositionally biased stretch (acidic residues) spans Phe-109 to Asp-119. A PX domain is found at Phe-230–Gln-340. Positions Leu-371–Leu-574 constitute a BAR domain.

It belongs to the sorting nexin family. Homodimer (via BAR domain). Interacts with ADAM15. Interacts with FASLG. Interacts (via SH3 domain) with DNM1 and DNM2. Interacts with WASL. Interacts with FCHSD1 (via the F-BAR domain). Post-translationally, phosphorylated. In terms of tissue distribution, detected in heart and pancreas.

The protein resides in the cytoplasm. It is found in the cytosol. Its subcellular location is the membrane. The protein localises to the cytoplasmic vesicle membrane. Plays a role in the reorganization of the cytoskeleton, endocytosis and cellular vesicle trafficking via its interactions with membranes, WASL, DNM1 and DNM2. Acts both during interphase and at the end of mitotic cell divisions. Required for efficient progress through mitosis and cytokinesis. Required for normal formation of the cleavage furrow at the end of mitosis. Modulates endocytosis of cell-surface proteins, such as APP and PRNP; this then modulates the secretion of APP and PRNP peptides. Promotes membrane tubulation (in vitro). May promote the formation of macropinosomes. The sequence is that of Sorting nexin-33 (SNX33) from Homo sapiens (Human).